Here is a 279-residue protein sequence, read N- to C-terminus: 5'-nucleotidase SurE (279 aa).

The a divalent metal cation site is built by Asp28, Asp29, Ser59, and Asn113.

It belongs to the SurE nucleotidase family. A divalent metal cation serves as cofactor.

It is found in the cytoplasm. The catalysed reaction is a ribonucleoside 5'-phosphate + H2O = a ribonucleoside + phosphate. Nucleotidase that shows phosphatase activity on nucleoside 5'-monophosphates. The protein is 5'-nucleotidase SurE of Methanospirillum hungatei JF-1 (strain ATCC 27890 / DSM 864 / NBRC 100397 / JF-1).